The primary structure comprises 659 residues: Putative pentatricopeptide repeat-containing protein At3g16890, mitochondrial (659 aa).

The transit peptide at 1 to 32 directs the protein to the mitochondrion; sequence MRGFASSASRIATAAAASKSLNASTSVNPKLS. PPR repeat units lie at residues 109–143, 144–178, 179–213, 214–248, 249–283, 284–318, 319–353, 354–388, 389–423, 424–458, 459–493, 494–528, 529–563, 564–598, and 599–633; these read DQSLKSVLGNALFRKGPLLLSMELLKEIRDSGYRI, SDELMCVLIGSWGRLGLAKYCNDVFAQISFLGMKP, STRLYNAVIDALVKSNSLDLAYLKFQQMRSDGCKP, DRFTYNILIHGVCKKGVVDEAIRLVKQMEQEGNRP, NVFTYTILIDGFLIAGRVDEALKQLEMMRVRKLNP, NEATIRTFVHGIFRCLPPCKAFEVLVGFMEKDSNL, QRVGYDAVLYCLSNNSMAKETGQFLRKIGERGYIP, DSSTFNAAMSCLLKGHDLVETCRIFDGFVSRGVKP, GFNGYLVLVQALLNAQRFSEGDRYLKQMGVDGLLS, SVYSYNAVIDCLCKARRIENAAMFLTEMQDRGISP, NLVTFNTFLSGYSVRGDVKKVHGVLEKLLVHGFKP, DVITFSLIINCLCRAKEIKDAFDCFKEMLEWGIEP, NEITYNILIRSCCSTGDTDRSVKLFAKMKENGLSP, DLYAYNATIQSFCKMRKVKKAEELLKTMLRIGLKP, and DNFTYSTLIKALSESGRESEAREMFSSIERHGCVP.

Belongs to the PPR family. P subfamily.

The protein resides in the mitochondrion. Required for the ubiquinol-cytochrome c oxidoreductase activity of mitochondrial complex III. This chain is Putative pentatricopeptide repeat-containing protein At3g16890, mitochondrial (PPR40), found in Arabidopsis thaliana (Mouse-ear cress).